The sequence spans 394 residues: Probable dual specificity protein phosphatase DDB_G0281963 (394 aa).

Positions 2-142 constitute a Tyrosine-protein phosphatase domain; sequence NDVSRIFPGF…LKKYELILKK (141 aa). Catalysis depends on Cys86, which acts as the Phosphocysteine intermediate. The tract at residues 147–191 is disordered; that stretch reads PQIVEKESEEEDDDEDDDDDDYDSDEDDDDDSEDDDFEEEFDNVV. Acidic residues predominate over residues 153–188; the sequence is ESEEEDDDEDDDDDDYDSDEDDDDDSEDDDFEEEFD.

This sequence belongs to the protein-tyrosine phosphatase family. Non-receptor class dual specificity subfamily.

It catalyses the reaction O-phospho-L-tyrosyl-[protein] + H2O = L-tyrosyl-[protein] + phosphate. The catalysed reaction is O-phospho-L-seryl-[protein] + H2O = L-seryl-[protein] + phosphate. The enzyme catalyses O-phospho-L-threonyl-[protein] + H2O = L-threonyl-[protein] + phosphate. In terms of biological role, has a dual specificity toward Ser/Thr and Tyr-containing proteins. The polypeptide is Probable dual specificity protein phosphatase DDB_G0281963 (Dictyostelium discoideum (Social amoeba)).